The sequence spans 79 residues: Acyl carrier protein (79 aa).

Residues 3–78 (QEILEKVRSI…DAVSYIQEKK (76 aa)) enclose the Carrier domain. S38 is modified (O-(pantetheine 4'-phosphoryl)serine).

This sequence belongs to the acyl carrier protein (ACP) family. In terms of processing, 4'-phosphopantetheine is transferred from CoA to a specific serine of apo-ACP by AcpS. This modification is essential for activity because fatty acids are bound in thioester linkage to the sulfhydryl of the prosthetic group.

The protein resides in the cytoplasm. It participates in lipid metabolism; fatty acid biosynthesis. Carrier of the growing fatty acid chain in fatty acid biosynthesis. This chain is Acyl carrier protein, found in Synechococcus sp. (strain RCC307).